The sequence spans 268 residues: MFGPILIFDSGIGGLSIFDEIRKVLPDQDCCYLFDNARLPYGELEESVLIKGCVELICEQALKIDASLVVVACNSASTLVLPGLRERLSIPIVGVVPAIKPAAKLSIARHIGLLATPGTIKRSYTRELIEQFADGCKVELFGSSELVMLAEAKLAGESVDLIKLRAQLEPIRQSKLDTLVLGCTHFPIIASEMQQILGNGVKLLDSGVAIAQRVVFLLNEFSLDKVVDNRTKNLTAIYTTAEISAGLTTRLAEKGFTKIVSRSSANLG.

Substrate-binding positions include 9-10 (DS) and 41-42 (YG). The Proton donor/acceptor role is filled by Cys73. A substrate-binding site is contributed by 74-75 (NS). The Proton donor/acceptor role is filled by Cys183. 184–185 (TH) contacts substrate.

It belongs to the aspartate/glutamate racemases family.

The catalysed reaction is L-glutamate = D-glutamate. Its pathway is cell wall biogenesis; peptidoglycan biosynthesis. Its function is as follows. Provides the (R)-glutamate required for cell wall biosynthesis. The protein is Glutamate racemase of Shewanella pealeana (strain ATCC 700345 / ANG-SQ1).